The sequence spans 267 residues: tRNA pseudouridine synthase A (267 aa).

The Nucleophile role is filled by Asp51. Tyr109 contributes to the substrate binding site.

The protein belongs to the tRNA pseudouridine synthase TruA family. Homodimer.

The catalysed reaction is uridine(38/39/40) in tRNA = pseudouridine(38/39/40) in tRNA. Functionally, formation of pseudouridine at positions 38, 39 and 40 in the anticodon stem and loop of transfer RNAs. The chain is tRNA pseudouridine synthase A from Staphylococcus aureus (strain USA300).